We begin with the raw amino-acid sequence, 621 residues long: Hemolysin ahh1 (621 aa).

The first 30 residues, 1-30 (MKNKKPRKFITQAPTLSLLALALLAGSVQA), serve as a signal peptide directing secretion. The Ricin B-type lectin domain occupies 491-610 (RPVNLQLGGF…QNVSVRTLTS (120 aa)).

It belongs to the HlyA hemolysin family.

Its function is as follows. Bacterial hemolysins are exotoxins that attack blood cell membranes and cause cell rupture by mechanisms not clearly defined. The protein is Hemolysin ahh1 (ahh1) of Aeromonas hydrophila subsp. hydrophila (strain ATCC 7966 / DSM 30187 / BCRC 13018 / CCUG 14551 / JCM 1027 / KCTC 2358 / NCIMB 9240 / NCTC 8049).